Consider the following 290-residue polypeptide: tRNA(Ile)-lysidine synthase (290 aa).

An ATP-binding site is contributed by 12–17; the sequence is SGGSDS.

It belongs to the tRNA(Ile)-lysidine synthase family.

The protein localises to the cytoplasm. The enzyme catalyses cytidine(34) in tRNA(Ile2) + L-lysine + ATP = lysidine(34) in tRNA(Ile2) + AMP + diphosphate + H(+). Functionally, ligates lysine onto the cytidine present at position 34 of the AUA codon-specific tRNA(Ile) that contains the anticodon CAU, in an ATP-dependent manner. Cytidine is converted to lysidine, thus changing the amino acid specificity of the tRNA from methionine to isoleucine. This Mycoplasma genitalium (strain ATCC 33530 / DSM 19775 / NCTC 10195 / G37) (Mycoplasmoides genitalium) protein is tRNA(Ile)-lysidine synthase.